The chain runs to 78 residues: Small ribosomal subunit protein bS18 (78 aa).

It belongs to the bacterial ribosomal protein bS18 family. In terms of assembly, part of the 30S ribosomal subunit. Forms a tight heterodimer with protein bS6.

Functionally, binds as a heterodimer with protein bS6 to the central domain of the 16S rRNA, where it helps stabilize the platform of the 30S subunit. This Parafrankia sp. (strain EAN1pec) protein is Small ribosomal subunit protein bS18.